Reading from the N-terminus, the 368-residue chain is NAD(P)H-quinone oxidoreductase subunit 1, chloroplastic (368 aa).

9 helical membrane passes run 27-47, 97-117, 130-150, 166-186, 204-224, 249-269, 270-290, 305-325, and 348-368; these read FLWI…GVLV, WLFN…YLVI, IGVF…LMAG, AAQS…IALL, FLSW…IASL, YSGM…LVSS, LFVT…FSLF, VISI…FLFI, and FLLP…LFLL.

This sequence belongs to the complex I subunit 1 family. In terms of assembly, NDH is composed of at least 16 different subunits, 5 of which are encoded in the nucleus.

It localises to the plastid. The protein resides in the chloroplast thylakoid membrane. The enzyme catalyses a plastoquinone + NADH + (n+1) H(+)(in) = a plastoquinol + NAD(+) + n H(+)(out). The catalysed reaction is a plastoquinone + NADPH + (n+1) H(+)(in) = a plastoquinol + NADP(+) + n H(+)(out). Functionally, NDH shuttles electrons from NAD(P)H:plastoquinone, via FMN and iron-sulfur (Fe-S) centers, to quinones in the photosynthetic chain and possibly in a chloroplast respiratory chain. The immediate electron acceptor for the enzyme in this species is believed to be plastoquinone. Couples the redox reaction to proton translocation, and thus conserves the redox energy in a proton gradient. In Marchantia polymorpha (Common liverwort), this protein is NAD(P)H-quinone oxidoreductase subunit 1, chloroplastic.